A 68-amino-acid chain; its full sequence is DNA-directed RNA polymerase subunit omega (68 aa).

This sequence belongs to the RNA polymerase subunit omega family. The RNAP catalytic core consists of 2 alpha, 1 beta, 1 beta' and 1 omega subunit. When a sigma factor is associated with the core the holoenzyme is formed, which can initiate transcription.

The enzyme catalyses RNA(n) + a ribonucleoside 5'-triphosphate = RNA(n+1) + diphosphate. Functionally, promotes RNA polymerase assembly. Latches the N- and C-terminal regions of the beta' subunit thereby facilitating its interaction with the beta and alpha subunits. This is DNA-directed RNA polymerase subunit omega from Listeria monocytogenes serotype 4b (strain CLIP80459).